We begin with the raw amino-acid sequence, 93 residues long: Small ribosomal subunit protein bS20 (93 aa).

Positions 1–18 (MPLHKSAEKRLRQSEKRN) are enriched in basic and acidic residues. The interval 1-25 (MPLHKSAEKRLRQSEKRNARNRARK) is disordered.

The protein belongs to the bacterial ribosomal protein bS20 family.

Binds directly to 16S ribosomal RNA. The polypeptide is Small ribosomal subunit protein bS20 (Chlorobium chlorochromatii (strain CaD3)).